A 500-amino-acid chain; its full sequence is Probable malate:quinone oxidoreductase (500 aa).

Belongs to the MQO family. FAD is required as a cofactor.

The enzyme catalyses (S)-malate + a quinone = a quinol + oxaloacetate. It participates in carbohydrate metabolism; tricarboxylic acid cycle; oxaloacetate from (S)-malate (quinone route): step 1/1. This Corynebacterium glutamicum (strain R) protein is Probable malate:quinone oxidoreductase.